The primary structure comprises 530 residues: 4,4'-diapolycopene aldehyde oxidase (530 aa).

Active-site residues include Glu234 and Cys268.

This sequence belongs to the aldehyde dehydrogenase family.

It catalyses the reaction all-trans-4,4'-diapolycopen-4-al + A + H2O = all-trans-4,4'-diapolycopen-4-oate + AH2 + H(+). It carries out the reaction all-trans-4,4'-diapolycopene-4,4'-dial + 2 A + 2 H2O = all-trans-4,4'-diapolycopene-4,4'-dioate + 2 AH2 + 2 H(+). The protein operates within carotenoid biosynthesis. In terms of biological role, involved in the biosynthesis of C30 carotenoids. Catalyzes the oxidation of 4,4'-diapolycopene-4,4'-dial to yield 4,4'-diapolycopene-4,4'-dioic acid. Also able to catalyze the oxidation of 4,4'-diapolycopen-4-al to yield 4,4'-diapolycopen-4-oic acid. This chain is 4,4'-diapolycopene aldehyde oxidase, found in Methylomonas sp.